We begin with the raw amino-acid sequence, 469 residues long: Uronate isomerase (469 aa).

This sequence belongs to the metallo-dependent hydrolases superfamily. Uronate isomerase family.

The catalysed reaction is D-glucuronate = D-fructuronate. It catalyses the reaction aldehydo-D-galacturonate = keto-D-tagaturonate. It functions in the pathway carbohydrate metabolism; pentose and glucuronate interconversion. This chain is Uronate isomerase, found in Pectobacterium atrosepticum (strain SCRI 1043 / ATCC BAA-672) (Erwinia carotovora subsp. atroseptica).